The following is a 352-amino-acid chain: Phosphate acyltransferase (352 aa).

Positions 328-339 (ESFPGDAREREG) are enriched in basic and acidic residues. The tract at residues 328 to 352 (ESFPGDAREREGAQAPDAGTERVAS) is disordered.

The protein belongs to the PlsX family. In terms of assembly, homodimer. Probably interacts with PlsY.

The protein localises to the cytoplasm. The enzyme catalyses a fatty acyl-[ACP] + phosphate = an acyl phosphate + holo-[ACP]. Its pathway is lipid metabolism; phospholipid metabolism. Its function is as follows. Catalyzes the reversible formation of acyl-phosphate (acyl-PO(4)) from acyl-[acyl-carrier-protein] (acyl-ACP). This enzyme utilizes acyl-ACP as fatty acyl donor, but not acyl-CoA. The protein is Phosphate acyltransferase of Geobacter sp. (strain M21).